The sequence spans 262 residues: 5-methyltetrahydrofolate:corrinoid/iron-sulfur protein co-methyltransferase (262 aa).

The Pterin-binding domain occupies 1-246 (MLIIGERING…ETAATAEILL (246 aa)). 2 residues coordinate (6S)-5-methyl-5,6,7,8-tetrahydrofolate: asparagine 96 and aspartate 160. Position 184 (lysine 184) interacts with Ca(2+). Positions 199, 202, and 207 each coordinate (6S)-5-methyl-5,6,7,8-tetrahydrofolate. A methylcob(III)alamin-binding site is contributed by 202–203 (QN). Glycine 222 and aspartate 224 together coordinate Ca(2+).

The protein belongs to the vitamin-B12 dependent methionine synthase family. As to quaternary structure, heterohexamer composed of 2 subunits of AcsC, 2 subunits of AcsD and 2 subunits of AcsE. It depends on Ca(2+) as a cofactor.

The catalysed reaction is methyl-Co(III)-[corrinoid Fe-S protein] + (6S)-5,6,7,8-tetrahydrofolate = Co(I)-[corrinoid Fe-S protein] + (6S)-5-methyl-5,6,7,8-tetrahydrofolate + H(+). Its function is as follows. Methyltransferase that mediates the transfer of a N5-methyl group of (6S)-methyltetrahydrofolate to the 5-methoxybenzimidazolylcobamide cofactor of a corrinoid/Fe-S protein (AcsC/AcsD) in the anaerobic acetyl-CoA pathway (Wood-Ljungdahl pathway) of carbon monoxide and carbon dioxide fixation. The polypeptide is 5-methyltetrahydrofolate:corrinoid/iron-sulfur protein co-methyltransferase (acsE) (Moorella thermoacetica (Clostridium thermoaceticum)).